Here is a 211-residue protein sequence, read N- to C-terminus: Ferritin heavy chain (211 aa).

Positions 1-20 (MNSILLVFAGILAVCLPASA) are cleaved as a signal peptide. The region spanning 35–191 (ITMHRSCRNS…GKASTLKKLM (157 aa)) is the Ferritin-like diiron domain. Cysteine 41 and cysteine 150 are disulfide-bonded. Residues glutamate 52, glutamate 87, histidine 90, glutamate 136, and glutamine 173 each coordinate Fe cation.

Belongs to the ferritin family. Oligomer of 12 light (L) chains and 12 heavy (H) chains; L and H chains are disulfide-linked. The functional molecule forms a roughly spherical shell with a diameter of 12 nm and contains a central cavity into which the insoluble ferric iron core is deposited.

The protein resides in the golgi apparatus. Its subcellular location is the secreted. The catalysed reaction is 4 Fe(2+) + O2 + 4 H(+) = 4 Fe(3+) + 2 H2O. Its function is as follows. Stores iron in a soluble, non-toxic, readily available form. Important for iron homeostasis. Iron is taken up in the ferrous form and deposited as ferric hydroxides after oxidation. Ferritin is composed of a heavy (H) chain which is responsible for the oxidation and uptake of ferrous iron, and a light (L) chain which facilitates the nucleation of the ferrihydrite iron core. The protein is Ferritin heavy chain of Trichoplusia ni (Cabbage looper).